Reading from the N-terminus, the 393-residue chain is Pyridoxamine--pyruvate transaminase (393 aa).

Pyridoxal 5'-phosphate is bound by residues glutamate 68, tyrosine 95, and threonine 146. N6-(pyridoxal phosphate)lysine is present on lysine 197. Pyridoxal 5'-phosphate is bound at residue arginine 345.

This sequence belongs to the class-V pyridoxal-phosphate-dependent aminotransferase family. As to quaternary structure, homotetramer. Pyridoxal 5'-phosphate serves as cofactor.

It carries out the reaction pyridoxamine + pyruvate = pyridoxal + L-alanine. Functionally, catalyzes a reversible transamination reaction between pyridoxamine and pyruvate to form pyridoxal and L-alanine. This chain is Pyridoxamine--pyruvate transaminase (ppaT), found in Mesorhizobium japonicum (strain LMG 29417 / CECT 9101 / MAFF 303099) (Mesorhizobium loti (strain MAFF 303099)).